A 153-amino-acid chain; its full sequence is Regulatory protein RecX (153 aa).

It belongs to the RecX family.

The protein resides in the cytoplasm. Its function is as follows. Modulates RecA activity. The chain is Regulatory protein RecX from Neisseria meningitidis serogroup C / serotype 2a (strain ATCC 700532 / DSM 15464 / FAM18).